Reading from the N-terminus, the 316-residue chain is Putative mannose-6-phosphate isomerase YvyI (316 aa).

3 residues coordinate Zn(2+): H98, E116, and H173. R193 is a catalytic residue.

It belongs to the mannose-6-phosphate isomerase type 1 family. Requires Zn(2+) as cofactor.

The catalysed reaction is D-mannose 6-phosphate = D-fructose 6-phosphate. This Bacillus subtilis (strain 168) protein is Putative mannose-6-phosphate isomerase YvyI (yvyI).